The primary structure comprises 277 residues: ATP-dependent Clp protease proteolytic subunit, mitochondrial (277 aa).

Residues 1–56 constitute a mitochondrion transit peptide; sequence MWPGILVGGARVASCRYPALGPRLAAHFPAQRPPQRTLQNGLALQRCLHATATRAL. Ser-153 acts as the Nucleophile in catalysis. His-178 is a catalytic residue. At Lys-200 the chain carries N6-succinyllysine. Residue Lys-211 is modified to N6-acetyllysine. The disordered stretch occupies residues 246 to 277; that stretch reads VHPPQDGEDEPTLVQKEPVEAAPAAEPVPAST. The segment covering 265-277 has biased composition (low complexity); it reads EAAPAAEPVPAST.

The protein belongs to the peptidase S14 family. Fourteen CLPP subunits assemble into 2 heptameric rings which stack back to back to give a disk-like structure with a central cavity. Component of the ClpXP complex formed by the assembly of two CLPP heptameric rings with two CLPX hexameric rings, giving rise to a symmetrical structure with two central CLPP rings flanked by a CLPX ring at either end of the complex. In terms of tissue distribution, detected in liver (at protein level). Predominantly expressed in skeletal muscle. Intermediate levels in heart, liver and pancreas. Low in brain, placenta, lung and kidney.

It is found in the mitochondrion matrix. The catalysed reaction is Hydrolysis of proteins to small peptides in the presence of ATP and magnesium. alpha-casein is the usual test substrate. In the absence of ATP, only oligopeptides shorter than five residues are hydrolyzed (such as succinyl-Leu-Tyr-|-NHMec, and Leu-Tyr-Leu-|-Tyr-Trp, in which cleavage of the -Tyr-|-Leu- and -Tyr-|-Trp bonds also occurs).. Functionally, protease component of the ClpXP complex that cleaves peptides and various proteins in an ATP-dependent process. Has low peptidase activity in the absence of CLPX. The ClpXP complex can degrade CSN1S1, CSN2 and CSN3, as well as synthetic peptides (in vitro) and may be responsible for a fairly general and central housekeeping function rather than for the degradation of specific substrates. Cleaves PINK1 in the mitochondrion. This is ATP-dependent Clp protease proteolytic subunit, mitochondrial from Homo sapiens (Human).